The following is a 688-amino-acid chain: Translation initiation factor IF-2 (688 aa).

Positions 50–62 are enriched in basic and acidic residues; that stretch reads LLSGKEKSEKTKE. The tract at residues 50 to 95 is disordered; the sequence is LLSGKEKSEKTKEEDDEIETTAKNPIKESINNKKSNKRDDKNEKVN. A compositionally biased stretch (low complexity) spans 72 to 82; the sequence is KNPIKESINNK. Over residues 86-95 the composition is skewed to basic and acidic residues; that stretch reads KRDDKNEKVN. Positions 187-354 constitute a tr-type G domain; it reads KRSPIITVMG…MILLSSEILE (168 aa). A G1 region spans residues 196 to 203; the sequence is GHVDHGKT. 196–203 is a binding site for GTP; sequence GHVDHGKT. The tract at residues 221–225 is G2; that stretch reads GITQH. The interval 242 to 245 is G3; the sequence is DTPG. Residues 242-246 and 296-299 each bind GTP; these read DTPGH and NKID. The G4 stretch occupies residues 296–299; the sequence is NKID. The G5 stretch occupies residues 332 to 334; the sequence is SAH.

The protein belongs to the TRAFAC class translation factor GTPase superfamily. Classic translation factor GTPase family. IF-2 subfamily.

The protein localises to the cytoplasm. In terms of biological role, one of the essential components for the initiation of protein synthesis. Protects formylmethionyl-tRNA from spontaneous hydrolysis and promotes its binding to the 30S ribosomal subunits. Also involved in the hydrolysis of GTP during the formation of the 70S ribosomal complex. The polypeptide is Translation initiation factor IF-2 (Clostridium botulinum (strain Langeland / NCTC 10281 / Type F)).